Consider the following 161-residue polypeptide: Allophycocyanin beta chain (161 aa).

Asn-71 carries the post-translational modification N4-methylasparagine. Cys-81 lines the (2R,3E)-phycocyanobilin pocket.

The protein belongs to the phycobiliprotein family. In terms of assembly, heterodimer of an alpha and a beta chain. Contains one covalently linked phycocyanobilin chromophore.

The protein localises to the cellular thylakoid membrane. Its function is as follows. Light-harvesting photosynthetic bile pigment-protein from the phycobiliprotein complex. Allophycocyanin has a maximum absorption at approximately 650 nanometers. The polypeptide is Allophycocyanin beta chain (apcB) (Mastigocladus laminosus (Fischerella sp.)).